The sequence spans 382 residues: Mannitol-1-phosphate 5-dehydrogenase (382 aa).

3–14 (ALHFGAGNIGRG) lines the NAD(+) pocket.

The protein belongs to the mannitol dehydrogenase family.

The enzyme catalyses D-mannitol 1-phosphate + NAD(+) = beta-D-fructose 6-phosphate + NADH + H(+). In Salmonella enteritidis PT4 (strain P125109), this protein is Mannitol-1-phosphate 5-dehydrogenase.